A 270-amino-acid chain; its full sequence is tRNA pseudouridine synthase A (270 aa).

The Nucleophile role is filled by Asp60. An RNA binding region spans residues 107 to 111 (FHARF). Tyr118 provides a ligand contact to substrate. The interval 168 to 172 (QCQSR) is interaction with tRNA.

This sequence belongs to the tRNA pseudouridine synthase TruA family. Homodimer.

The enzyme catalyses uridine(38/39/40) in tRNA = pseudouridine(38/39/40) in tRNA. Functionally, formation of pseudouridine at positions 38, 39 and 40 in the anticodon stem and loop of transfer RNAs. This Citrobacter koseri (strain ATCC BAA-895 / CDC 4225-83 / SGSC4696) protein is tRNA pseudouridine synthase A.